Consider the following 373-residue polypeptide: Anhydro-N-acetylmuramic acid kinase (373 aa).

Position 13–20 (13–20 (GTSMDGID)) interacts with ATP.

It belongs to the anhydro-N-acetylmuramic acid kinase family.

It catalyses the reaction 1,6-anhydro-N-acetyl-beta-muramate + ATP + H2O = N-acetyl-D-muramate 6-phosphate + ADP + H(+). The protein operates within amino-sugar metabolism; 1,6-anhydro-N-acetylmuramate degradation. It functions in the pathway cell wall biogenesis; peptidoglycan recycling. Catalyzes the specific phosphorylation of 1,6-anhydro-N-acetylmuramic acid (anhMurNAc) with the simultaneous cleavage of the 1,6-anhydro ring, generating MurNAc-6-P. Is required for the utilization of anhMurNAc either imported from the medium or derived from its own cell wall murein, and thus plays a role in cell wall recycling. The polypeptide is Anhydro-N-acetylmuramic acid kinase (Brucella suis (strain ATCC 23445 / NCTC 10510)).